The following is a 147-amino-acid chain: Hemoglobin subunit epsilon-M (147 aa).

One can recognise a Globin domain in the interval 3 to 147 (HFTPEDKTNI…VSSALGHKYH (145 aa)). Phosphoserine occurs at positions 14 and 51. Heme b-binding residues include His64 and His93.

The protein belongs to the globin family. As to expression, red blood cells.

Its function is as follows. Hemoglobin epsilon chain is a beta-type chain found in early embryos. In Didelphis virginiana (North American opossum), this protein is Hemoglobin subunit epsilon-M (HBE1).